A 324-amino-acid polypeptide reads, in one-letter code: Glucokinase (324 aa).

Ile6 to Thr11 is a binding site for ATP.

This sequence belongs to the bacterial glucokinase family.

The protein resides in the cytoplasm. It catalyses the reaction D-glucose + ATP = D-glucose 6-phosphate + ADP + H(+). The sequence is that of Glucokinase from Zymomonas mobilis subsp. mobilis (strain ATCC 31821 / ZM4 / CP4).